We begin with the raw amino-acid sequence, 256 residues long: Acetylglutamate kinase (256 aa).

Residues 40 to 41 (GG), R62, and N153 each bind substrate.

This sequence belongs to the acetylglutamate kinase family. ArgB subfamily.

The protein localises to the cytoplasm. It catalyses the reaction N-acetyl-L-glutamate + ATP = N-acetyl-L-glutamyl 5-phosphate + ADP. It functions in the pathway amino-acid biosynthesis; L-arginine biosynthesis; N(2)-acetyl-L-ornithine from L-glutamate: step 2/4. Functionally, catalyzes the ATP-dependent phosphorylation of N-acetyl-L-glutamate. In Bacillus cytotoxicus (strain DSM 22905 / CIP 110041 / 391-98 / NVH 391-98), this protein is Acetylglutamate kinase.